Consider the following 327-residue polypeptide: uncharacterized protein (327 aa).

Residues 1–19 lie on the Cytoplasmic side of the membrane; it reads MSIAQDRGIVFKLLSIYRA. The helical transmembrane segment at 20–40 threads the bilayer; that stretch reads AAGIFMALAQLIVIFFGYCDF. At 41 to 51 the chain is on the extracellular side; the sequence is KIKGYRIASYN. The chain crosses the membrane as a helical span at residues 52–72; it reads APTFASSFIILAVCLLLVVVL. Residues 73 to 104 lie on the Cytoplasmic side of the membrane; it reads ENPEVKVTNSENSLFSALKQFFRVERKKLISC. A helical membrane pass occupies residues 105-125; the sequence is LILLWSMFLSSFIMSEVVYFM. At 126–141 the chain is on the extracellular side; the sequence is PLFLTLHVNWDTKFQG. A helical membrane pass occupies residues 142–162; the sequence is IAFMVASILGVTGSYFAPKLI. At 163–199 the chain is on the cytoplasmic side; sequence NVGCSCGRAKDGGLEESDTTGSETVEVKKKDSLYSGQ. A helical transmembrane segment spans residues 200 to 220; it reads VFLSIFALFVSLLGQAFMIGA. The Extracellular segment spans residues 221–235; it reads SEALKHKSMPPTNSG. A helical membrane pass occupies residues 236–256; the sequence is IFFSAGMSITLLGYNFLASSI. Over 257 to 275 the chain is Cytoplasmic; the sequence is PALFSMYIDPKLKVQLMPS. The chain crosses the membrane as a helical span at residues 276-296; the sequence is IGAISGIGKLVAPIVLAALYG. Over 297-300 the chain is Extracellular; sequence TRLG. Residues 301–321 traverse the membrane as a helical segment; sequence LSIAVGFGMILVAVSIPPLIW. Residues 322–327 lie on the Cytoplasmic side of the membrane; sequence LRKKRC.

Its subcellular location is the membrane. This is an uncharacterized protein from Saccharomyces cerevisiae (strain ATCC 204508 / S288c) (Baker's yeast).